A 451-amino-acid polypeptide reads, in one-letter code: Phosphoglucosamine mutase (451 aa).

The Phosphoserine intermediate role is filled by serine 102. Positions 102, 243, 245, and 247 each coordinate Mg(2+). The residue at position 102 (serine 102) is a Phosphoserine.

Belongs to the phosphohexose mutase family. Mg(2+) serves as cofactor. Activated by phosphorylation.

It carries out the reaction alpha-D-glucosamine 1-phosphate = D-glucosamine 6-phosphate. Functionally, catalyzes the conversion of glucosamine-6-phosphate to glucosamine-1-phosphate. The chain is Phosphoglucosamine mutase from Brucella anthropi (strain ATCC 49188 / DSM 6882 / CCUG 24695 / JCM 21032 / LMG 3331 / NBRC 15819 / NCTC 12168 / Alc 37) (Ochrobactrum anthropi).